The primary structure comprises 387 residues: Gamma-butyrobetaine dioxygenase (387 aa).

Positions 38, 40, 43, and 82 each coordinate Zn(2+). His202, Asp204, and His347 together coordinate Fe cation. Ser351 is modified (phosphoserine).

It belongs to the gamma-BBH/TMLD family. Requires Fe(2+) as cofactor. The cofactor is L-ascorbate.

The protein resides in the cytoplasm. It catalyses the reaction 4-(trimethylamino)butanoate + 2-oxoglutarate + O2 = carnitine + succinate + CO2. It functions in the pathway amine and polyamine biosynthesis; carnitine biosynthesis. Catalyzes the formation of L-carnitine from gamma-butyrobetaine. The chain is Gamma-butyrobetaine dioxygenase (Bbox1) from Mus musculus (Mouse).